The chain runs to 231 residues: 4-aminobenzoate synthase (231 aa).

Residues Glu81, His88, Glu142, His174, Asp178, and His181 each coordinate Fe(2+).

The protein belongs to the CADD family. In terms of assembly, homodimer. During infection, interacts with death domains of mammalian tumor necrosis factor (TNF) family receptors Fas, DR4, DR5 and to some extent TNFR1, but not with the respective downstream adapters. Fe(2+) serves as cofactor. Requires Mn(2+) as cofactor.

It localises to the secreted. The protein resides in the host cytoplasm. The protein is a cosubstrate rather than a true enzyme and is left in an inactive state after a single turnover. Inactive under anaerobic conditions. Its function is as follows. Involved in de novo para-aminobenzoate (PABA) biosynthesis. Acts as a self-sacrificing or 'suicide' enzyme that utilizes its own active site tyrosine residue(s) as the substrate for PABA synthesis. The side chain of the tyrosine residue is released from the protein backbone via cleavage of the C(alpha)-C(beta) bond, leaving a glycine in place of the original tyrosine residue. Reaction requires O(2) and a reduced dimetal cofactor. Functionally, was also identified as a specific toxin that associates with death domains of tumor necrosis factor family (TNF) receptors and induces apoptosis in mammalian cell lines through a Caspase-dependent mechanism. This chain is 4-aminobenzoate synthase, found in Chlamydia trachomatis serovar D (strain ATCC VR-885 / DSM 19411 / UW-3/Cx).